The following is a 329-amino-acid chain: DNA-directed RNA polymerase subunit alpha (329 aa).

The tract at residues 1 to 234 is alpha N-terminal domain (alpha-NTD); it reads MQGSVTEFLK…EQLDAFVELR (234 aa). An alpha C-terminal domain (alpha-CTD) region spans residues 248-329; sequence FDPILLRPVD…WPPASLADDL (82 aa).

This sequence belongs to the RNA polymerase alpha chain family. As to quaternary structure, homodimer. The RNAP catalytic core consists of 2 alpha, 1 beta, 1 beta' and 1 omega subunit. When a sigma factor is associated with the core the holoenzyme is formed, which can initiate transcription.

The enzyme catalyses RNA(n) + a ribonucleoside 5'-triphosphate = RNA(n+1) + diphosphate. DNA-dependent RNA polymerase catalyzes the transcription of DNA into RNA using the four ribonucleoside triphosphates as substrates. The polypeptide is DNA-directed RNA polymerase subunit alpha (Shewanella baltica (strain OS155 / ATCC BAA-1091)).